Reading from the N-terminus, the 406-residue chain is Kelch domain-containing protein 2 (406 aa).

Kelch repeat units lie at residues 31–85 (ERSG…NTEG), 92–136 (SGSC…ERID), 148–207 (LGVW…AWSQ), 221–259 (HACA…NELI), 271–311 (HSLT…IQFN), and 322–359 (HTAC…IFSV).

In terms of assembly, component of a CRL2(KLHDC2) E3 ubiquitin-protein ligase complex, also named ECS(KLHDC2) complex, composed of CUL2, Elongin BC (ELOB and ELOC), RBX1 and substrate-specific adapter KLHDC2. May form oligomers as a KLHDC2-ELOB-ELOC complex; this interaction is autoinhibitory for the E3 ligase complex as the substrate-binding site of KLHDC2 is blocked in the oligomer. Interacts with CREB3; interaction is direct and specific as it does not interact with CREB1, ATF4, ATF6, JUN, FOS, CEBPA or herpes simplex virus transactivator VP16. Post-translationally, autoubiquitinated by the CRL2(KLHDC2) E3 ligase complex.

It localises to the nucleus. It functions in the pathway protein modification; protein ubiquitination. Substrate-recognition component of a Cul2-RING (CRL2) E3 ubiquitin-protein ligase complex of the DesCEND (destruction via C-end degrons) pathway, which recognizes a C-degron located at the extreme C terminus of target proteins, leading to their ubiquitination and degradation. The C-degron recognized by the DesCEND pathway is usually a motif of less than ten residues and can be present in full-length proteins, truncated proteins or proteolytically cleaved forms. The CRL2(KLHDC2) complex specifically recognizes proteins with a diglycine (Gly-Gly) at the C-terminus, leading to their ubiquitination and degradation. The CRL2(KLHDC2) complex mediates ubiquitination and degradation of truncated SELENOK and SELENOS selenoproteins produced by failed UGA/Sec decoding, which end with a diglycine. The CRL2(KLHDC2) complex also recognizes proteolytically cleaved proteins ending with Gly-Gly, such as the N-terminal fragment of USP1, leading to their degradation. May also act as an indirect repressor of CREB3-mediated transcription by interfering with CREB3-DNA-binding. In Mus musculus (Mouse), this protein is Kelch domain-containing protein 2.